Here is a 454-residue protein sequence, read N- to C-terminus: Bifunctional protein GlmU (454 aa).

A pyrophosphorylase region spans residues 1–233 (MTNRTCLAVI…RESAVGINNR (233 aa)). UDP-N-acetyl-alpha-D-glucosamine-binding positions include 11–14 (LAAG), Lys25, Gln79, and 84–85 (GT). Position 109 (Asp109) interacts with Mg(2+). UDP-N-acetyl-alpha-D-glucosamine is bound by residues Gly145, Glu159, Asn174, and Asn231. Asn231 contributes to the Mg(2+) binding site. A linker region spans residues 234-254 (AELAEAEAVWQQKRRRELMLS). The interval 255-454 (GVTLIAPETV…AEEKAKKSGG (200 aa)) is N-acetyltransferase. UDP-N-acetyl-alpha-D-glucosamine-binding residues include Arg320 and Lys338. His350 acts as the Proton acceptor in catalysis. 2 residues coordinate UDP-N-acetyl-alpha-D-glucosamine: Tyr353 and Asn364. Residues Ala367, 373–374 (NY), Ser410, and Arg427 each bind acetyl-CoA.

The protein in the N-terminal section; belongs to the N-acetylglucosamine-1-phosphate uridyltransferase family. In the C-terminal section; belongs to the transferase hexapeptide repeat family. As to quaternary structure, homotrimer. The cofactor is Mg(2+).

It localises to the cytoplasm. The catalysed reaction is alpha-D-glucosamine 1-phosphate + acetyl-CoA = N-acetyl-alpha-D-glucosamine 1-phosphate + CoA + H(+). The enzyme catalyses N-acetyl-alpha-D-glucosamine 1-phosphate + UTP + H(+) = UDP-N-acetyl-alpha-D-glucosamine + diphosphate. It participates in nucleotide-sugar biosynthesis; UDP-N-acetyl-alpha-D-glucosamine biosynthesis; N-acetyl-alpha-D-glucosamine 1-phosphate from alpha-D-glucosamine 6-phosphate (route II): step 2/2. It functions in the pathway nucleotide-sugar biosynthesis; UDP-N-acetyl-alpha-D-glucosamine biosynthesis; UDP-N-acetyl-alpha-D-glucosamine from N-acetyl-alpha-D-glucosamine 1-phosphate: step 1/1. The protein operates within bacterial outer membrane biogenesis; LPS lipid A biosynthesis. Catalyzes the last two sequential reactions in the de novo biosynthetic pathway for UDP-N-acetylglucosamine (UDP-GlcNAc). The C-terminal domain catalyzes the transfer of acetyl group from acetyl coenzyme A to glucosamine-1-phosphate (GlcN-1-P) to produce N-acetylglucosamine-1-phosphate (GlcNAc-1-P), which is converted into UDP-GlcNAc by the transfer of uridine 5-monophosphate (from uridine 5-triphosphate), a reaction catalyzed by the N-terminal domain. The chain is Bifunctional protein GlmU from Chelativorans sp. (strain BNC1).